The sequence spans 310 residues: Ribosomal protein L11 methyltransferase (310 aa).

T153, G174, D196, and N239 together coordinate S-adenosyl-L-methionine.

Belongs to the methyltransferase superfamily. PrmA family.

It localises to the cytoplasm. It carries out the reaction L-lysyl-[protein] + 3 S-adenosyl-L-methionine = N(6),N(6),N(6)-trimethyl-L-lysyl-[protein] + 3 S-adenosyl-L-homocysteine + 3 H(+). Methylates ribosomal protein L11. In Janthinobacterium sp. (strain Marseille) (Minibacterium massiliensis), this protein is Ribosomal protein L11 methyltransferase.